We begin with the raw amino-acid sequence, 451 residues long: Phosphoglucosamine mutase (451 aa).

Ser101 serves as the catalytic Phosphoserine intermediate. Mg(2+) is bound by residues Ser101, Asp240, Asp242, and Asp244. Ser101 carries the phosphoserine modification.

Belongs to the phosphohexose mutase family. Mg(2+) serves as cofactor. Post-translationally, activated by phosphorylation.

It catalyses the reaction alpha-D-glucosamine 1-phosphate = D-glucosamine 6-phosphate. In terms of biological role, catalyzes the conversion of glucosamine-6-phosphate to glucosamine-1-phosphate. The sequence is that of Phosphoglucosamine mutase from Streptococcus pyogenes serotype M2 (strain MGAS10270).